The chain runs to 456 residues: Phospholipase A1 member A (456 aa).

Residues 1–25 (MPPGPWESCFWVGGLLLWLSVGSSG) form the signal peptide. The Nucleophile role is filled by S166. Catalysis depends on D190, which acts as the Charge relay system. Residues C245 and C258 are joined by a disulfide bond. The Charge relay system role is filled by H260. 2 disulfides stabilise this stretch: C282–C293 and C296–C304. The N-linked (GlcNAc...) asparagine glycan is linked to N365.

The protein belongs to the AB hydrolase superfamily. Lipase family.

The protein localises to the secreted. The catalysed reaction is a 1,2-diacyl-sn-glycero-3-phospho-L-serine + H2O = a 2-acyl-sn-glycero-3-phospho-L-serine + a fatty acid + H(+). The enzyme catalyses 1,2-di-(9Z)-octadecenoyl-sn-glycero-3-phospho-L-serine + H2O = 2-(9Z-octadecenoyl)-sn-glycero-3-phospho-L-serine + (9Z)-octadecenoate + H(+). It carries out the reaction 1-hexadecanoyl-2-(5Z,8Z,11Z,14Z-eicosatetraenoyl)-sn-glycero-3-phospho-L-serine + H2O = 2-(5Z,8Z,11Z,14Z)-eicosatetraenoyl-sn-glycero-3-phospho-L-serine + hexadecanoate + H(+). It catalyses the reaction a 1-acyl-sn-glycero-3-phospho-L-serine + H2O = sn-glycero-3-phospho-L-serine + a fatty acid + H(+). The catalysed reaction is 1-(9Z-octadecenoyl)-sn-glycero-3-phospho-L-serine + H2O = sn-glycero-3-phospho-L-serine + (9Z)-octadecenoate + H(+). Its function is as follows. Hydrolyzes the ester bond of the acyl group attached at the sn-1 position of phosphatidylserines (phospholipase A1 activity) and 1-acyl-2-lysophosphatidylserines (lysophospholipase activity) in the pathway of phosphatidylserines acyl chain remodeling. Cleaves phosphatidylserines exposed on the outer leaflet of the plasma membrane of apoptotic cells producing 2-acyl-1-lysophosphatidylserines, which in turn enhance mast cell activation and histamine production. Has no activity toward other glycerophospholipids including phosphatidylcholines, phosphatidylethanolamines, phosphatidic acids or phosphatidylinositols, or glycerolipids such as triolein. The chain is Phospholipase A1 member A (PLA1A) from Pongo abelii (Sumatran orangutan).